Consider the following 716-residue polypeptide: Fatty acid oxidation complex subunit alpha (716 aa).

An enoyl-CoA hydratase/isomerase region spans residues 1–189 (MIYQSPTIQV…KVGAVDAVVA (189 aa)). A substrate-binding site is contributed by Asp-296. The 3-hydroxyacyl-CoA dehydrogenase stretch occupies residues 311–716 (KAVNSAAVLG…AANNGSYYQA (406 aa)). NAD(+) is bound by residues Met-324, Asp-343, 400–402 (VVE), Lys-407, and Ser-429. His-450 (for 3-hydroxyacyl-CoA dehydrogenase activity) is an active-site residue. Asn-453 is an NAD(+) binding site. Substrate contacts are provided by Asn-500 and Tyr-660.

It in the N-terminal section; belongs to the enoyl-CoA hydratase/isomerase family. The protein in the C-terminal section; belongs to the 3-hydroxyacyl-CoA dehydrogenase family. As to quaternary structure, heterotetramer of two alpha chains (FadB) and two beta chains (FadA).

The catalysed reaction is a (3S)-3-hydroxyacyl-CoA + NAD(+) = a 3-oxoacyl-CoA + NADH + H(+). It carries out the reaction a (3S)-3-hydroxyacyl-CoA = a (2E)-enoyl-CoA + H2O. The enzyme catalyses a 4-saturated-(3S)-3-hydroxyacyl-CoA = a (3E)-enoyl-CoA + H2O. It catalyses the reaction (3S)-3-hydroxybutanoyl-CoA = (3R)-3-hydroxybutanoyl-CoA. The catalysed reaction is a (3Z)-enoyl-CoA = a 4-saturated (2E)-enoyl-CoA. It carries out the reaction a (3E)-enoyl-CoA = a 4-saturated (2E)-enoyl-CoA. It functions in the pathway lipid metabolism; fatty acid beta-oxidation. Its function is as follows. Involved in the aerobic and anaerobic degradation of long-chain fatty acids via beta-oxidation cycle. Catalyzes the formation of 3-oxoacyl-CoA from enoyl-CoA via L-3-hydroxyacyl-CoA. It can also use D-3-hydroxyacyl-CoA and cis-3-enoyl-CoA as substrate. The sequence is that of Fatty acid oxidation complex subunit alpha from Shewanella oneidensis (strain ATCC 700550 / JCM 31522 / CIP 106686 / LMG 19005 / NCIMB 14063 / MR-1).